Here is a 109-residue protein sequence, read N- to C-terminus: Thiosulfate sulfurtransferase GlpE (109 aa).

In terms of domain architecture, Rhodanese spans Arg16–Ala104. Residue Cys64 is the Cysteine persulfide intermediate of the active site.

It belongs to the GlpE family.

The protein localises to the cytoplasm. The catalysed reaction is thiosulfate + hydrogen cyanide = thiocyanate + sulfite + 2 H(+). It catalyses the reaction thiosulfate + [thioredoxin]-dithiol = [thioredoxin]-disulfide + hydrogen sulfide + sulfite + 2 H(+). In terms of biological role, transferase that catalyzes the transfer of sulfur from thiosulfate to thiophilic acceptors such as cyanide or dithiols. May function in a CysM-independent thiosulfate assimilation pathway by catalyzing the conversion of thiosulfate to sulfite, which can then be used for L-cysteine biosynthesis. This chain is Thiosulfate sulfurtransferase GlpE, found in Ectopseudomonas mendocina (strain ymp) (Pseudomonas mendocina).